Here is a 157-residue protein sequence, read N- to C-terminus: Protein Smg (157 aa).

Belongs to the Smg family.

The protein is Protein Smg of Buchnera aphidicola subsp. Schizaphis graminum (strain Sg).